The primary structure comprises 351 residues: Dysbindin (351 aa).

The stretch at 106–179 (FLADLECLTA…AELDAEHAQK (74 aa)) forms a coiled coil. Positions 291–325 (RHKLSSLSSTCTDSASQEASEGESPVVQSDEEEVQ) are disordered. Low complexity predominate over residues 295 to 306 (SSLSSTCTDSAS).

Belongs to the dysbindin family. Component of the biogenesis of lysosome-related organelles complex 1 (BLOC-1).

The protein localises to the cytoplasm. The protein resides in the cytoplasmic vesicle membrane. It localises to the cytoplasmic vesicle. It is found in the secretory vesicle. Its subcellular location is the synaptic vesicle membrane. The protein localises to the endosome membrane. The protein resides in the melanosome membrane. It localises to the nucleus. It is found in the postsynaptic density. Its subcellular location is the endoplasmic reticulum. Component of the BLOC-1 complex, a complex that is required for normal biogenesis of lysosome-related organelles (LRO), such as platelet dense granules and melanosomes. Plays a role in intracellular vesicle trafficking. Plays a role in synaptic vesicle trafficking and in neurotransmitter release. May be required for normal dopamine homeostasis in the cerebral cortex, hippocampus, and hypothalamus. Plays a role in the regulation of cell surface exposure of DRD2. Contributes to the regulation of dopamine signaling. May play a role in actin cytoskeleton reorganization and neurite outgrowth. The chain is Dysbindin (DTNBP1) from Gallus gallus (Chicken).